The chain runs to 223 residues: Noggin-3 (223 aa).

Positions 1-23 (MDNIPYFLATVLIFSLGFRIEEG) are cleaved as a signal peptide. Asn-60 and Asn-93 each carry an N-linked (GlcNAc...) asparagine glycan.

Belongs to the noggin family. Homodimer; disulfide-linked.

The protein resides in the secreted. In terms of biological role, may function as an inhibitor of bone morphogenetic proteins (BMP) signaling during later stages of development including late phases of dorsoventral patterning, to refine the early pattern set up by the interaction of chordino and BMP2/4. Not involved in organizer function or early phases of dorsoventral pattern formation. In Danio rerio (Zebrafish), this protein is Noggin-3 (nog3).